Reading from the N-terminus, the 94-residue chain is FXYD domain-containing ion transport regulator 6 (94 aa).

An N-terminal signal peptide occupies residues methionine 1 to alanine 17. The Extracellular portion of the chain corresponds to serine 18–glutamine 34. A helical transmembrane segment spans residues threonine 35–serine 57. Over arginine 58 to asparagine 94 the chain is Cytoplasmic.

The protein belongs to the FXYD family. Regulatory subunit of the sodium/potassium-transporting ATPase which is composed of a catalytic alpha subunit, a non-catalytic beta subunit and an additional regulatory subunit. The regulatory subunit, a member of the FXYD protein family, modulates the enzymatic activity in a tissue- and isoform-specific way by changing affinities of the Na+/K+-ATPase toward Na(+), K(+) or ATP. Expressed in the neuronal fibers of the medial part of lateral habenula nucleus, thalamus, hypothalamus, stria terminalis, zona incerta, amygdaloid body and cingulum, olfactory bulb, hippocampus, cerebral cortex and cerebellum. In the cerebellum there is a predominant expression pattern in the granule layer of lobules VI-IX of the posterior lobe. Detected in inner ear.

It localises to the cell membrane. In terms of biological role, associates with and regulates the activity of the sodium/potassium-transporting ATPase (NKA) which catalyzes the hydrolysis of ATP coupled with the exchange of Na(+) and K(+) ions across the plasma membrane. Decreases the apparent affinity of the transporter for Na(+). In addition to modulating NKA kinetics, may also function as a regulator of NKA localization to the plasma membrane. In Rattus norvegicus (Rat), this protein is FXYD domain-containing ion transport regulator 6 (Fxyd6).